The primary structure comprises 171 residues: Ribosome maturation factor RimM (171 aa).

The PRC barrel domain maps to 96–170 (PDSYYHFQLE…TMTVRLPDGL (75 aa)).

The protein belongs to the RimM family. As to quaternary structure, binds ribosomal protein uS19.

It is found in the cytoplasm. Functionally, an accessory protein needed during the final step in the assembly of 30S ribosomal subunit, possibly for assembly of the head region. Essential for efficient processing of 16S rRNA. May be needed both before and after RbfA during the maturation of 16S rRNA. It has affinity for free ribosomal 30S subunits but not for 70S ribosomes. The polypeptide is Ribosome maturation factor RimM (Heliobacterium modesticaldum (strain ATCC 51547 / Ice1)).